Reading from the N-terminus, the 705-residue chain is Elongation factor G (705 aa).

Residues 8 to 290 (ERYRNFGIMA…GVVHLLPSPA (283 aa)) form the tr-type G domain. Residues 17 to 24 (AHIDAGKT), 88 to 92 (DTPGH), and 142 to 145 (NKMD) contribute to the GTP site. The segment at 290–309 (ADRPPVQGIDEDEKEDTRAA) is disordered.

It belongs to the TRAFAC class translation factor GTPase superfamily. Classic translation factor GTPase family. EF-G/EF-2 subfamily.

The protein localises to the cytoplasm. Functionally, catalyzes the GTP-dependent ribosomal translocation step during translation elongation. During this step, the ribosome changes from the pre-translocational (PRE) to the post-translocational (POST) state as the newly formed A-site-bound peptidyl-tRNA and P-site-bound deacylated tRNA move to the P and E sites, respectively. Catalyzes the coordinated movement of the two tRNA molecules, the mRNA and conformational changes in the ribosome. This chain is Elongation factor G, found in Xanthomonas euvesicatoria pv. vesicatoria (strain 85-10) (Xanthomonas campestris pv. vesicatoria).